Consider the following 347-residue polypeptide: NAD-dependent alcohol dehydrogenase (347 aa).

Position 11 is an N6-methyllysine (lysine 11). 7 residues coordinate Zn(2+): cysteine 38, histidine 68, glutamate 98, cysteine 101, cysteine 104, cysteine 112, and cysteine 154. N6-methyllysine is present on lysine 213.

It belongs to the zinc-containing alcohol dehydrogenase family. Homodimer and homotetramer. Requires Zn(2+) as cofactor.

It carries out the reaction a primary alcohol + NAD(+) = an aldehyde + NADH + H(+). The catalysed reaction is a secondary alcohol + NAD(+) = a ketone + NADH + H(+). This Sulfurisphaera tokodaii (strain DSM 16993 / JCM 10545 / NBRC 100140 / 7) (Sulfolobus tokodaii) protein is NAD-dependent alcohol dehydrogenase (adh).